The following is a 118-amino-acid chain: Large ribosomal subunit protein uL18 (118 aa).

The protein belongs to the universal ribosomal protein uL18 family. As to quaternary structure, part of the 50S ribosomal subunit; part of the 5S rRNA/L5/L18/L25 subcomplex. Contacts the 5S and 23S rRNAs.

Functionally, this is one of the proteins that bind and probably mediate the attachment of the 5S RNA into the large ribosomal subunit, where it forms part of the central protuberance. This Rickettsia akari (strain Hartford) protein is Large ribosomal subunit protein uL18.